Here is a 219-residue protein sequence, read N- to C-terminus: Intraflagellar transport protein 22 (219 aa).

GTP-binding positions include 12 to 19 (GPSKSGKS) and 72 to 79 (WDVGGSSK).

The protein belongs to the small GTPase superfamily. Rab family.

Its subcellular location is the cytoplasm. It is found in the cytoskeleton. It localises to the flagellum basal body. The protein localises to the cell projection. The protein resides in the cilium. Its subcellular location is the flagellum. Required for flagellum formation. The chain is Intraflagellar transport protein 22 (IFT22) from Trypanosoma brucei brucei (strain 927/4 GUTat10.1).